Consider the following 284-residue polypeptide: D-tagatose-1,6-bisphosphate aldolase subunit GatY (284 aa).

Catalysis depends on Asp82, which acts as the Proton donor. The Zn(2+) site is built by His83 and His180. A dihydroxyacetone phosphate-binding site is contributed by Gly181. His208 is a Zn(2+) binding site. Dihydroxyacetone phosphate-binding positions include 209–211 (GAS) and 230–233 (NVAT).

Belongs to the class II fructose-bisphosphate aldolase family. TagBP aldolase GatY subfamily. As to quaternary structure, forms a complex with GatZ. Zn(2+) is required as a cofactor.

The catalysed reaction is D-tagatofuranose 1,6-bisphosphate = D-glyceraldehyde 3-phosphate + dihydroxyacetone phosphate. The protein operates within carbohydrate metabolism; D-tagatose 6-phosphate degradation; D-glyceraldehyde 3-phosphate and glycerone phosphate from D-tagatose 6-phosphate: step 2/2. Functionally, catalytic subunit of the tagatose-1,6-bisphosphate aldolase GatYZ, which catalyzes the reversible aldol condensation of dihydroxyacetone phosphate (DHAP or glycerone-phosphate) with glyceraldehyde 3-phosphate (G3P) to produce tagatose 1,6-bisphosphate (TBP). Requires GatZ subunit for full activity and stability. Is involved in the catabolism of galactitol. The protein is D-tagatose-1,6-bisphosphate aldolase subunit GatY of Escherichia coli O6:H1 (strain CFT073 / ATCC 700928 / UPEC).